The sequence spans 410 residues: Peptidase T (410 aa).

H78 is a Zn(2+) binding site. D80 is a catalytic residue. A Zn(2+)-binding site is contributed by D140. E174 functions as the Proton acceptor in the catalytic mechanism. Residues E175, D197, and H379 each coordinate Zn(2+).

This sequence belongs to the peptidase M20B family. Zn(2+) serves as cofactor.

The protein localises to the cytoplasm. It catalyses the reaction Release of the N-terminal residue from a tripeptide.. Functionally, cleaves the N-terminal amino acid of tripeptides. The sequence is that of Peptidase T from Vibrio atlanticus (strain LGP32) (Vibrio splendidus (strain Mel32)).